The sequence spans 399 residues: Exodeoxyribonuclease 7 large subunit (399 aa).

It belongs to the XseA family. In terms of assembly, heterooligomer composed of large and small subunits.

The protein resides in the cytoplasm. The catalysed reaction is Exonucleolytic cleavage in either 5'- to 3'- or 3'- to 5'-direction to yield nucleoside 5'-phosphates.. Bidirectionally degrades single-stranded DNA into large acid-insoluble oligonucleotides, which are then degraded further into small acid-soluble oligonucleotides. This Clostridium acetobutylicum (strain ATCC 824 / DSM 792 / JCM 1419 / IAM 19013 / LMG 5710 / NBRC 13948 / NRRL B-527 / VKM B-1787 / 2291 / W) protein is Exodeoxyribonuclease 7 large subunit.